Reading from the N-terminus, the 335-residue chain is Glyceraldehyde-3-phosphate dehydrogenase 2 (335 aa).

Residues 13–14, D35, and R80 each bind NAD(+); that span reads RI. 2 positions are modified to phosphoserine: S125 and S151. A D-glyceraldehyde 3-phosphate-binding site is contributed by 151 to 153; the sequence is SCT. C152 serves as the catalytic Nucleophile. T153, T154, T182, and T184 each carry phosphothreonine. A D-glyceraldehyde 3-phosphate-binding site is contributed by T182. 3 positions are modified to phosphoserine: S192, S203, and S209. Phosphothreonine is present on T211. D-glyceraldehyde 3-phosphate is bound by residues 211–212 and R234; that span reads TG. Residue T237 is modified to Phosphothreonine. S241 carries the phosphoserine modification. Position 316 (N316) interacts with NAD(+).

Belongs to the glyceraldehyde-3-phosphate dehydrogenase family. In terms of assembly, homotetramer.

The protein localises to the cytoplasm. It carries out the reaction D-glyceraldehyde 3-phosphate + phosphate + NAD(+) = (2R)-3-phospho-glyceroyl phosphate + NADH + H(+). The protein operates within carbohydrate degradation; glycolysis; pyruvate from D-glyceraldehyde 3-phosphate: step 1/5. This chain is Glyceraldehyde-3-phosphate dehydrogenase 2 (gpd3), found in Schizosaccharomyces pombe (strain 972 / ATCC 24843) (Fission yeast).